The following is a 416-amino-acid chain: uncharacterized protein (416 aa).

The [4Fe-4S] cluster site is built by Cys-63, Cys-75, Cys-78, and Cys-152. S-adenosyl-L-methionine is bound by residues Gln-253, Phe-280, Glu-300, and Asp-348. Cys-374 serves as the catalytic Nucleophile.

Belongs to the class I-like SAM-binding methyltransferase superfamily. RNA M5U methyltransferase family.

This is an uncharacterized protein from Agrobacterium fabrum (strain C58 / ATCC 33970) (Agrobacterium tumefaciens (strain C58)).